The primary structure comprises 362 residues: Holliday junction branch migration complex subunit RuvB (362 aa).

The disordered stretch occupies residues 1–27 (MANIEKTEFHVPAPVSAAGNQKSSLGN). Residues 13–206 (APVSAAGNQK…FGFTAQMEFY (194 aa)) form a large ATPase domain (RuvB-L) region. ATP-binding positions include L45, R46, G87, K90, T91, T92, 153 to 155 (EDF), R196, Y206, and R243. Position 91 (T91) interacts with Mg(2+). A small ATPAse domain (RuvB-S) region spans residues 207–277 (EVEDLTKVVV…AAQAALVVFD (71 aa)). The head domain (RuvB-H) stretch occupies residues 280 to 362 (EMGLDRLDRA…EPPEGIIGSL (83 aa)). R335 and R340 together coordinate DNA.

This sequence belongs to the RuvB family. In terms of assembly, homohexamer. Forms an RuvA(8)-RuvB(12)-Holliday junction (HJ) complex. HJ DNA is sandwiched between 2 RuvA tetramers; dsDNA enters through RuvA and exits via RuvB. An RuvB hexamer assembles on each DNA strand where it exits the tetramer. Each RuvB hexamer is contacted by two RuvA subunits (via domain III) on 2 adjacent RuvB subunits; this complex drives branch migration. In the full resolvosome a probable DNA-RuvA(4)-RuvB(12)-RuvC(2) complex forms which resolves the HJ.

Its subcellular location is the cytoplasm. The catalysed reaction is ATP + H2O = ADP + phosphate + H(+). Functionally, the RuvA-RuvB-RuvC complex processes Holliday junction (HJ) DNA during genetic recombination and DNA repair, while the RuvA-RuvB complex plays an important role in the rescue of blocked DNA replication forks via replication fork reversal (RFR). RuvA specifically binds to HJ cruciform DNA, conferring on it an open structure. The RuvB hexamer acts as an ATP-dependent pump, pulling dsDNA into and through the RuvAB complex. RuvB forms 2 homohexamers on either side of HJ DNA bound by 1 or 2 RuvA tetramers; 4 subunits per hexamer contact DNA at a time. Coordinated motions by a converter formed by DNA-disengaged RuvB subunits stimulates ATP hydrolysis and nucleotide exchange. Immobilization of the converter enables RuvB to convert the ATP-contained energy into a lever motion, pulling 2 nucleotides of DNA out of the RuvA tetramer per ATP hydrolyzed, thus driving DNA branch migration. The RuvB motors rotate together with the DNA substrate, which together with the progressing nucleotide cycle form the mechanistic basis for DNA recombination by continuous HJ branch migration. Branch migration allows RuvC to scan DNA until it finds its consensus sequence, where it cleaves and resolves cruciform DNA. This chain is Holliday junction branch migration complex subunit RuvB, found in Corynebacterium diphtheriae (strain ATCC 700971 / NCTC 13129 / Biotype gravis).